We begin with the raw amino-acid sequence, 355 residues long: NADH-quinone oxidoreductase subunit H (355 aa).

8 helical membrane passes run Ile-25–Trp-45, Trp-91–Ile-111, Leu-126–Ala-146, Met-170–Val-190, Phe-205–Ile-225, Gly-252–Leu-272, Phe-290–Trp-310, and Val-330–Leu-350.

This sequence belongs to the complex I subunit 1 family. In terms of assembly, NDH-1 is composed of 14 different subunits. Subunits NuoA, H, J, K, L, M, N constitute the membrane sector of the complex.

It is found in the cell inner membrane. The catalysed reaction is a quinone + NADH + 5 H(+)(in) = a quinol + NAD(+) + 4 H(+)(out). Its function is as follows. NDH-1 shuttles electrons from NADH, via FMN and iron-sulfur (Fe-S) centers, to quinones in the respiratory chain. The immediate electron acceptor for the enzyme in this species is believed to be ubiquinone. Couples the redox reaction to proton translocation (for every two electrons transferred, four hydrogen ions are translocated across the cytoplasmic membrane), and thus conserves the redox energy in a proton gradient. This subunit may bind ubiquinone. The polypeptide is NADH-quinone oxidoreductase subunit H (Burkholderia lata (strain ATCC 17760 / DSM 23089 / LMG 22485 / NCIMB 9086 / R18194 / 383)).